Consider the following 236-residue polypeptide: uncharacterized protein (236 aa).

Residues 1–73 (MEPGGSENAA…GGGWGWGNTQ (73 aa)) are disordered.

This is an uncharacterized protein from Homo sapiens (Human).